Here is a 336-residue protein sequence, read N- to C-terminus: Aspartate--ammonia ligase (336 aa).

It belongs to the class-II aminoacyl-tRNA synthetase family. AsnA subfamily.

The protein localises to the cytoplasm. It carries out the reaction L-aspartate + NH4(+) + ATP = L-asparagine + AMP + diphosphate + H(+). It participates in amino-acid biosynthesis; L-asparagine biosynthesis; L-asparagine from L-aspartate (ammonia route): step 1/1. In Ligilactobacillus salivarius (strain UCC118) (Lactobacillus salivarius), this protein is Aspartate--ammonia ligase.